The chain runs to 256 residues: Cilia- and flagella-associated protein 410 (256 aa).

3 LRR repeats span residues 19 to 40 (SVRKLNCWGSRLTDISICQEMP), 41 to 62 (SLEVITLSVNSISTLEPVSRCQ), and 63 to 84 (RLSELYLRRNRIPSLAELFYLK). One can recognise an LRRCT domain in the interval 97-137 (NPCCGTSPHRYRMTVLRTLPRLQKLDNQAVTEEELSRALSE). Disordered regions lie at residues 129-156 (EELSRALSEGEEITAAPEREGTGHGGPK) and 168-212 (AETG…SSHR). A phosphoserine mark is found at S136 and S177.

As to quaternary structure, found in a complex with CFAP410, NEK1 and SPATA7. Interacts with NEK1. In terms of tissue distribution, widely expressed. Expressed in the retina.

The protein localises to the mitochondrion. It localises to the cytoplasm. It is found in the cytoskeleton. The protein resides in the cilium basal body. Its subcellular location is the cell projection. The protein localises to the cilium. It localises to the photoreceptor outer segment. In terms of biological role, plays a role in cilia formation and/or maintenance. Plays a role in the regulation of cell morphology and cytoskeletal organization. Involved in DNA damage repair. The protein is Cilia- and flagella-associated protein 410 of Homo sapiens (Human).